Here is a 331-residue protein sequence, read N- to C-terminus: PDZ and LIM domain protein 4 (331 aa).

The PDZ domain occupies 1 to 84 (MPHSVTLRGP…HLTLSVSRPE (84 aa)). Disordered stretches follow at residues 80–99 (VSRP…KAQA), 105–152 (DSEA…GSNS), and 221–243 (AGEG…ASKL). A phosphoserine mark is found at S112, S116, S120, and S135. An LIM zinc-binding domain is found at 254–313 (PECTRCGHGIVGTIVKARDKLYHPECFMCSDCGLNLKQRGYFFLDERLYCESHAKARVKP).

In terms of assembly, homodimer. Interacts (via C-terminus only or via combined C-terminus and LIM domain, but not LIM domain only) with PTPN13 (via the second or fourth PDZ domains). Found in a complex with PTPN13 and TRIP6. Interacts (via PDZ domain) with ACTN1 and ACTN2 (via C-terminal SDL residues). Interacts (via PDZ domain) with TRIP6 (via the second LIM domain or via the third LIM domain plus C-terminus). Interacts (via LIM domain) with GRIA1 (via C-terminus); this interaction as well as the interaction with alpha-actinin is required for their colocalization in early endosomes. Interacts with PDLIM1. Forms (via LIM domain) a heterodimer with PDLIM3. Interacts directly with SRC (via kinase domain and to a lesser extent the SH2 domain). Phosphorylated on tyrosine residue(s). Can be dephosphorylated by PTPN13.

Its subcellular location is the cytoplasm. The protein resides in the cytoskeleton. The protein localises to the cell projection. It is found in the dendritic spine. It localises to the early endosome membrane. Its subcellular location is the recycling endosome membrane. The protein resides in the nucleus. The protein localises to the perinuclear region. It is found in the lamellipodium. It localises to the synapse. Its subcellular location is the synaptosome. In terms of biological role, suppresses SRC activation by recognizing and binding to active SRC and facilitating PTPN13-mediated dephosphorylation of SRC 'Tyr-419' leading to its inactivation. Inactivated SRC dissociates from this protein allowing the initiation of a new SRC inactivation cycle. Involved in reorganization of the actin cytoskeleton. In nonmuscle cells, binds to ACTN1 (alpha-actinin-1), increases the affinity of ACTN1 to F-actin (filamentous actin), and promotes formation of actin stress fibers. Involved in regulation of the synaptic AMPA receptor transport in dendritic spines of hippocampal pyramidal neurons directing the receptors toward an insertion at the postsynaptic membrane. Links endosomal surface-internalized GRIA1-containing AMPA receptors to the alpha-actinin/actin cytoskeleton. Increases AMPA receptor-mediated excitatory postsynaptic currents in neurons. The polypeptide is PDZ and LIM domain protein 4 (PDLIM4) (Bos taurus (Bovine)).